The chain runs to 232 residues: uncharacterized protein (232 aa).

The next 5 helical transmembrane spans lie at 4-24 (LLGV…YVFE), 42-62 (VLVG…LAVL), 100-120 (LFFI…ILHM), 145-165 (LAFV…FFTL), and 171-191 (GNLI…WVGF).

The protein localises to the cell membrane. This is an uncharacterized protein from Aquifex aeolicus (strain VF5).